Reading from the N-terminus, the 179-residue chain is Peptidyl-prolyl cis-trans isomerase H (179 aa).

The PPIase cyclophilin-type domain occupies phenylalanine 16–glutamate 178.

It belongs to the cyclophilin-type PPIase family. PPIase H subfamily.

It is found in the nucleus. The enzyme catalyses [protein]-peptidylproline (omega=180) = [protein]-peptidylproline (omega=0). PPIases accelerate the folding of proteins. It catalyzes the cis-trans isomerization of proline imidic peptide bonds in oligopeptides. The chain is Peptidyl-prolyl cis-trans isomerase H (CYP3) from Cryptococcus neoformans var. neoformans serotype D (strain B-3501A) (Filobasidiella neoformans).